A 205-amino-acid polypeptide reads, in one-letter code: Thymidylate kinase (205 aa).

Residue 11–18 (GLDKSGKT) coordinates ATP.

This sequence belongs to the thymidylate kinase family. Homodimer; the dimer arrangement is orthogonal and not antiparallel as in human enzyme.

It carries out the reaction dTMP + ATP = dTDP + ADP. It participates in pyrimidine metabolism; dTTP biosynthesis. Its function is as follows. Poxvirus TMP kinase is able to phosphorylate dTMP, dUMP and also dGMP from any purine and pyrimidine nucleoside triphosphate. The large substrate specificity is explained by the presence of a canal connecting the edge of the dimer interface to the TMP base binding pocket, canal not found in the human homolog. The polypeptide is Thymidylate kinase (OPG178) (Homo sapiens (Human)).